The sequence spans 481 residues: Proline--tRNA ligase 2 (481 aa).

This sequence belongs to the class-II aminoacyl-tRNA synthetase family. ProS type 3 subfamily. Homodimer.

The protein localises to the cytoplasm. The catalysed reaction is tRNA(Pro) + L-proline + ATP = L-prolyl-tRNA(Pro) + AMP + diphosphate. In terms of biological role, catalyzes the attachment of proline to tRNA(Pro) in a two-step reaction: proline is first activated by ATP to form Pro-AMP and then transferred to the acceptor end of tRNA(Pro). The chain is Proline--tRNA ligase 2 from Clostridioides difficile (strain 630) (Peptoclostridium difficile).